A 191-amino-acid chain; its full sequence is Probable GTP-binding protein EngB (191 aa).

Positions 22-191 constitute an EngB-type G domain; that stretch reads DFDHFLILGR…KLINEEFSNE (170 aa). GTP-binding positions include 30–37, 57–61, 75–78, 142–145, and 172–174; these read GRSNVGKS, GKTIT, DAPG, TKYD, and TSS. Mg(2+)-binding residues include S37 and T59.

Belongs to the TRAFAC class TrmE-Era-EngA-EngB-Septin-like GTPase superfamily. EngB GTPase family. Requires Mg(2+) as cofactor.

Functionally, necessary for normal cell division and for the maintenance of normal septation. In Acholeplasma laidlawii (strain PG-8A), this protein is Probable GTP-binding protein EngB.